The sequence spans 141 residues: Small ribosomal subunit protein uS12 (141 aa).

This sequence belongs to the universal ribosomal protein uS12 family. Part of the 30S ribosomal subunit.

Functionally, with S4 and S5 plays an important role in translational accuracy. Located at the interface of the 30S and 50S subunits. The sequence is that of Small ribosomal subunit protein uS12 from Methanosphaera stadtmanae (strain ATCC 43021 / DSM 3091 / JCM 11832 / MCB-3).